A 156-amino-acid polypeptide reads, in one-letter code: Snaclec A6 (156 aa).

Positions 1–23 (MGRSISVSFGLLVVFLSLSGTGA) are cleaved as a signal peptide. Intrachain disulfides connect Cys27–Cys38, Cys55–Cys154, and Cys129–Cys146. Residues 34–155 (HEGHCYKVFN…CGKPYRFTCE (122 aa)) enclose the C-type lectin domain.

The protein belongs to the snaclec family. In terms of assembly, heterodimer; disulfide-linked. Expressed by the venom gland.

It is found in the secreted. Its function is as follows. Interferes with one step of hemostasis (modulation of platelet aggregation, or coagulation cascade, for example). The sequence is that of Snaclec A6 from Macrovipera lebetinus (Levantine viper).